The primary structure comprises 200 residues: Pyridoxal 5'-phosphate synthase subunit PdxT (200 aa).

Residue 52–54 coordinates L-glutamine; sequence GES. The active-site Nucleophile is the C84. Residues R116 and 145–146 each bind L-glutamine; that span reads IR. Catalysis depends on charge relay system residues H181 and E183.

The protein belongs to the glutaminase PdxT/SNO family. In terms of assembly, in the presence of PdxS, forms a dodecamer of heterodimers. Only shows activity in the heterodimer.

It catalyses the reaction aldehydo-D-ribose 5-phosphate + D-glyceraldehyde 3-phosphate + L-glutamine = pyridoxal 5'-phosphate + L-glutamate + phosphate + 3 H2O + H(+). The enzyme catalyses L-glutamine + H2O = L-glutamate + NH4(+). It participates in cofactor biosynthesis; pyridoxal 5'-phosphate biosynthesis. Catalyzes the hydrolysis of glutamine to glutamate and ammonia as part of the biosynthesis of pyridoxal 5'-phosphate. The resulting ammonia molecule is channeled to the active site of PdxS. This is Pyridoxal 5'-phosphate synthase subunit PdxT from Saccharolobus islandicus (strain M.16.27) (Sulfolobus islandicus).